Reading from the N-terminus, the 400-residue chain is Enoyl-[acyl-carrier-protein] reductase [NADH] (400 aa).

Residues 48–53 (GSSSGY), 74–75 (FE), 111–112 (DA), and 139–140 (LA) each bind NAD(+). A substrate-binding site is contributed by Y225. The active-site Proton donor is Y235. Residues K244 and 273–275 (VVT) each bind NAD(+).

This sequence belongs to the TER reductase family. Monomer.

It catalyses the reaction a 2,3-saturated acyl-[ACP] + NAD(+) = a (2E)-enoyl-[ACP] + NADH + H(+). The protein operates within lipid metabolism; fatty acid biosynthesis. Its function is as follows. Involved in the final reduction of the elongation cycle of fatty acid synthesis (FAS II). Catalyzes the reduction of a carbon-carbon double bond in an enoyl moiety that is covalently linked to an acyl carrier protein (ACP). The chain is Enoyl-[acyl-carrier-protein] reductase [NADH] from Shewanella loihica (strain ATCC BAA-1088 / PV-4).